We begin with the raw amino-acid sequence, 252 residues long: Adaptation to cold protein B (252 aa).

In terms of assembly, interacts with AtcC, but not with AtcA and AtcJ. Interacts with the RNA polymerase subunits RpoB and RpoC.

Functionally, involved in cold adaptation. Directly interacts with the RNA polymerase and decreases its activity. May direct the DnaK chaperone to the RNA polymerase to sustain life at low temperatures. Overproduction prevents bacterial growth due to RNA polymerase inhibition. This chain is Adaptation to cold protein B, found in Shewanella oneidensis (strain ATCC 700550 / JCM 31522 / CIP 106686 / LMG 19005 / NCIMB 14063 / MR-1).